Reading from the N-terminus, the 447-residue chain is MRSIASSKRVCTHCLSHSRLFSTTVQHRAQPSSDAVPSSPPRSGYARLTNRGLISITGVDSTTFLQGLITQNMLVANDPSRATRRTGTYTAFLNSQGRVLNDAFIYPMPKGDGETATTDDPAWLVEVDKNEVSSLLKHLKKHKLRSKLKLRALEDGERTVWSSWKDHSEPRWAAYNLESESSSPFSPSSSVAGCIDTRAPGFGSRLVTPGEEDLRVHLPDEAQVAGSEVDLGTYTVRRMLHGIAEGQAEIIRESALPLECNMDMMRGVDFRKGCYVGQELTIRTHHTGVVRKRIVPVQLYAKSPLPSGETPVYDPTAAVALPPSGSNISKVDGRKGRSAGKFLGGVGNIGLALCRLEIMTDIVLTGEGSQSSPEQEFKISWSAPEEASSDTTEPAEVKVKALVPPWLREYISSGARNLARKVDSQEGHRAKELLYQLEEEEEQRRNE.

The transit peptide at 1 to 28 (MRSIASSKRVCTHCLSHSRLFSTTVQHR) directs the protein to the mitochondrion. The tract at residues 367–396 (EGSQSSPEQEFKISWSAPEEASSDTTEPAE) is disordered.

This sequence belongs to the GcvT family. CAF17/IBA57 subfamily.

It is found in the mitochondrion matrix. This Neosartorya fischeri (strain ATCC 1020 / DSM 3700 / CBS 544.65 / FGSC A1164 / JCM 1740 / NRRL 181 / WB 181) (Aspergillus fischerianus) protein is Iron-sulfur cluster assembly factor IBA57 homolog, mitochondrial (caf17).